A 592-amino-acid chain; its full sequence is Isocitrate dehydrogenase kinase/phosphatase 1 (592 aa).

ATP contacts are provided by residues 337-343 and Lys-358; that span reads APGTPGM. The active site involves Asp-393.

This sequence belongs to the AceK family.

The protein resides in the cytoplasm. The catalysed reaction is L-seryl-[isocitrate dehydrogenase] + ATP = O-phospho-L-seryl-[isocitrate dehydrogenase] + ADP + H(+). Bifunctional enzyme which can phosphorylate or dephosphorylate isocitrate dehydrogenase (IDH) on a specific serine residue. This is a regulatory mechanism which enables bacteria to bypass the Krebs cycle via the glyoxylate shunt in response to the source of carbon. When bacteria are grown on glucose, IDH is fully active and unphosphorylated, but when grown on acetate or ethanol, the activity of IDH declines drastically concomitant with its phosphorylation. The sequence is that of Isocitrate dehydrogenase kinase/phosphatase 1 from Pseudoalteromonas translucida (strain TAC 125).